The chain runs to 74 residues: Probable tetrachloroethene reductive dehalogenase membrane anchor protein (74 aa).

The next 2 helical transmembrane spans lie at 11–31 (ALGL…ISMG) and 40–60 (AGSI…FLLM).

It belongs to the PceB family.

The protein resides in the cell inner membrane. In terms of biological role, may act as a membrane anchor for the tetrachloroethene reductive dehalogenase PceA. This is Probable tetrachloroethene reductive dehalogenase membrane anchor protein from Sulfurospirillum multivorans (Dehalospirillum multivorans).